The chain runs to 479 residues: Siroheme synthase (479 aa).

Residues 1-202 (MNYLPIFLDL…GRDSEAEAQL (202 aa)) form a precorrin-2 dehydrogenase /sirohydrochlorin ferrochelatase region. NAD(+) is bound by residues 22–23 (ET) and 43–44 (PA). A Phosphoserine modification is found at serine 128. The uroporphyrinogen-III C-methyltransferase stretch occupies residues 217–479 (GEVYLVGAGP…TPLEAPDHLA (263 aa)). Proline 226 contacts S-adenosyl-L-methionine. Aspartate 249 serves as the catalytic Proton acceptor. Catalysis depends on lysine 271, which acts as the Proton donor. Residues 302-304 (GGD), isoleucine 307, 332-333 (TA), methionine 384, and glycine 413 each bind S-adenosyl-L-methionine.

It in the N-terminal section; belongs to the precorrin-2 dehydrogenase / sirohydrochlorin ferrochelatase family. The protein in the C-terminal section; belongs to the precorrin methyltransferase family.

It catalyses the reaction uroporphyrinogen III + 2 S-adenosyl-L-methionine = precorrin-2 + 2 S-adenosyl-L-homocysteine + H(+). The enzyme catalyses precorrin-2 + NAD(+) = sirohydrochlorin + NADH + 2 H(+). The catalysed reaction is siroheme + 2 H(+) = sirohydrochlorin + Fe(2+). It functions in the pathway cofactor biosynthesis; adenosylcobalamin biosynthesis; precorrin-2 from uroporphyrinogen III: step 1/1. It participates in cofactor biosynthesis; adenosylcobalamin biosynthesis; sirohydrochlorin from precorrin-2: step 1/1. Its pathway is porphyrin-containing compound metabolism; siroheme biosynthesis; precorrin-2 from uroporphyrinogen III: step 1/1. The protein operates within porphyrin-containing compound metabolism; siroheme biosynthesis; siroheme from sirohydrochlorin: step 1/1. It functions in the pathway porphyrin-containing compound metabolism; siroheme biosynthesis; sirohydrochlorin from precorrin-2: step 1/1. Functionally, multifunctional enzyme that catalyzes the SAM-dependent methylations of uroporphyrinogen III at position C-2 and C-7 to form precorrin-2 via precorrin-1. Then it catalyzes the NAD-dependent ring dehydrogenation of precorrin-2 to yield sirohydrochlorin. Finally, it catalyzes the ferrochelation of sirohydrochlorin to yield siroheme. This Thiobacillus denitrificans (strain ATCC 25259 / T1) protein is Siroheme synthase.